Reading from the N-terminus, the 451-residue chain is Trigger factor (451 aa).

Residues 171-256 enclose the PPIase FKBP-type domain; that stretch reads GDRVKVNFKG…ATAIEAPEDK (86 aa).

This sequence belongs to the FKBP-type PPIase family. Tig subfamily.

It localises to the cytoplasm. The enzyme catalyses [protein]-peptidylproline (omega=180) = [protein]-peptidylproline (omega=0). Involved in protein export. Acts as a chaperone by maintaining the newly synthesized protein in an open conformation. Functions as a peptidyl-prolyl cis-trans isomerase. In Bradyrhizobium sp. (strain ORS 278), this protein is Trigger factor.